An 824-amino-acid chain; its full sequence is C-Jun-amino-terminal kinase-interacting protein 2 (824 aa).

Disordered stretches follow at residues 1 to 28, 40 to 160, 172 to 349, and 361 to 501; these read MADR…QDIS, ITDD…GFDL, CSPA…DSPW, and EGSS…APRD. Residues 77-110 show a composition bias toward acidic residues; it reads DFQEFEMIDDNEEEDDEDEEEEEEEEEGDGEGQE. Residues 110–275 form a JNK-binding domain (JBD) region; the sequence is EGGDPGSEAP…RMISSISETE (166 aa). Over residues 141–156 the composition is skewed to polar residues; the sequence is LRLTTLGAQDSLNNNG. Residues 239 to 498 are necessary for interaction with FGF13; sequence GRGGRRSSQE…PGGRGTGPSA (260 aa). Phosphoserine occurs at positions 254, 302, and 305. Residues 268–305 show a composition bias toward low complexity; the sequence is ISSISETELELSSDGGSSSSGRSSHLTNSIEEASSPAS. Positions 327-346 are enriched in acidic residues; it reads TNSEYESGSESEPDLSEDAD. The segment covering 416 to 432 has biased composition (pro residues); the sequence is APPPPAPAAPRPGPAQP. Over residues 451 to 467 the composition is skewed to low complexity; that stretch reads AAPGRAARPGRACSAAC. The segment covering 468–484 has biased composition (acidic residues); sequence SEEEDEEDDEEEEDAED. The 62-residue stretch at 604-665 folds into the SH3 domain; the sequence is EREQTHRAVF…PAFYAHAVPG (62 aa). The PID domain maps to 677-813; that stretch reads PCWVERFDVQ…FLEYYQEHLA (137 aa).

This sequence belongs to the JIP scaffold family. As to quaternary structure, forms homo- or heterooligomeric complexes. Binds specific components of the JNK signaling pathway namely JNK1, JNK2, JNK3, MAP2K7, MAP3K10, MAP3K11, MAP3K12 and MAPK13. Also binds the proline-rich domain-containing splice variant of apolipoprotein E receptor 2 (ApoER2). Binds the cytoplasmic tails of LRP1 and LRP2 (Megalin). Binds the TPR motif-containing C-terminal of kinesin light chain, Klc1, pre-assembled MAPK8IP1 scaffolding complexes are then transported as a cargo of kinesin, to the required subcellular location. Interacts with the cytoplasmic domain of APP. Interacts with DCLK2. Interacts with TIAM1 and TIAM2. Interacts with FGF13; enables the interaction with MAPK13 and may regulate the MAPK8IP2 scaffolding activity. Interacts with SH3RF2. As to expression, expressed mainly in the brain and pancreas, including insulin-secreting cells. In the nervous system, more abundantly expressed in the cerebellum, pituitary gland, occipital lobe and the amygdala. Also expressed in fetal brain. Very low levels found in uterus, ovary, prostate, colon, testis, adrenal gland, thyroid gland and salivary gland.

Its subcellular location is the cytoplasm. The JNK-interacting protein (JIP) group of scaffold proteins selectively mediates JNK signaling by aggregating specific components of the MAPK cascade to form a functional JNK signaling module. JIP2 inhibits IL1 beta-induced apoptosis in insulin-secreting cells. May function as a regulator of vesicle transport, through interactions with the JNK-signaling components and motor proteins. The chain is C-Jun-amino-terminal kinase-interacting protein 2 (MAPK8IP2) from Homo sapiens (Human).